A 1392-amino-acid polypeptide reads, in one-letter code: ATP-dependent helicase/nuclease subunit A (1392 aa).

The UvrD-like helicase ATP-binding domain occupies 4–595 (FKPTPAQSKA…IVLGENFRSM (592 aa)). 25–32 (ASAGSGKT) contacts ATP. One can recognise a UvrD-like helicase C-terminal domain in the interval 623-929 (AHLKYAATYY…NVMTIHGSKG (307 aa)).

The protein belongs to the helicase family. AddA subfamily. In terms of assembly, heterodimer of AddA and AddB/RexB. Mg(2+) serves as cofactor.

It carries out the reaction Couples ATP hydrolysis with the unwinding of duplex DNA by translocating in the 3'-5' direction.. It catalyses the reaction ATP + H2O = ADP + phosphate + H(+). Its function is as follows. The heterodimer acts as both an ATP-dependent DNA helicase and an ATP-dependent, dual-direction single-stranded exonuclease. Recognizes the chi site generating a DNA molecule suitable for the initiation of homologous recombination. The AddA nuclease domain is required for chi fragment generation; this subunit has the helicase and 3' -&gt; 5' nuclease activities. The sequence is that of ATP-dependent helicase/nuclease subunit A from Limosilactobacillus reuteri subsp. reuteri (strain JCM 1112) (Lactobacillus reuteri).